We begin with the raw amino-acid sequence, 165 residues long: Transcriptional repressor NrdR (165 aa).

The segment at 3–34 (CPYCGQLNNRVVDSRLSRSEFAVRRRRECLDC) is a zinc-finger region. One can recognise an ATP-cone domain in the interval 49–139 (VMVVKKDGRR…VYREFKDVDD (91 aa)).

Belongs to the NrdR family. Zn(2+) is required as a cofactor.

Its function is as follows. Negatively regulates transcription of bacterial ribonucleotide reductase nrd genes and operons by binding to NrdR-boxes. This Desulforapulum autotrophicum (strain ATCC 43914 / DSM 3382 / VKM B-1955 / HRM2) (Desulfobacterium autotrophicum) protein is Transcriptional repressor NrdR.